A 221-amino-acid polypeptide reads, in one-letter code: Ribosomal RNA small subunit methyltransferase G (221 aa).

3 residues coordinate S-adenosyl-L-methionine: Gly-78, Phe-83, and Arg-150.

This sequence belongs to the methyltransferase superfamily. RNA methyltransferase RsmG family.

Its subcellular location is the cytoplasm. In terms of biological role, specifically methylates the N7 position of a guanine in 16S rRNA. This chain is Ribosomal RNA small subunit methyltransferase G, found in Bifidobacterium longum (strain DJO10A).